Consider the following 284-residue polypeptide: NAD kinase (284 aa).

Asp-70 serves as the catalytic Proton acceptor. NAD(+) contacts are provided by residues Asp-70–Gly-71, Asn-139–Glu-140, Lys-167, Asp-169, Leu-177, Thr-180–Ser-185, and Gln-236.

It belongs to the NAD kinase family. Requires a divalent metal cation as cofactor.

Its subcellular location is the cytoplasm. The catalysed reaction is NAD(+) + ATP = ADP + NADP(+) + H(+). In terms of biological role, involved in the regulation of the intracellular balance of NAD and NADP, and is a key enzyme in the biosynthesis of NADP. Catalyzes specifically the phosphorylation on 2'-hydroxyl of the adenosine moiety of NAD to yield NADP. This is NAD kinase from Helicobacter pylori (strain J99 / ATCC 700824) (Campylobacter pylori J99).